Here is a 281-residue protein sequence, read N- to C-terminus: Diaminopimelate epimerase (281 aa).

The substrate site is built by Asn-13 and Asn-66. The active-site Proton donor is Cys-75. Substrate-binding positions include 76 to 77 (GN), Asn-164, Asn-197, and 215 to 216 (ER). The active-site Proton acceptor is the Cys-224. 225 to 226 (GT) provides a ligand contact to substrate.

This sequence belongs to the diaminopimelate epimerase family. In terms of assembly, homodimer.

The protein resides in the cytoplasm. It catalyses the reaction (2S,6S)-2,6-diaminopimelate = meso-2,6-diaminopimelate. It participates in amino-acid biosynthesis; L-lysine biosynthesis via DAP pathway; DL-2,6-diaminopimelate from LL-2,6-diaminopimelate: step 1/1. Functionally, catalyzes the stereoinversion of LL-2,6-diaminopimelate (L,L-DAP) to meso-diaminopimelate (meso-DAP), a precursor of L-lysine and an essential component of the bacterial peptidoglycan. This is Diaminopimelate epimerase from Gloeothece citriformis (strain PCC 7424) (Cyanothece sp. (strain PCC 7424)).